Consider the following 65-residue polypeptide: Large ribosomal subunit protein bL35 (65 aa).

This sequence belongs to the bacterial ribosomal protein bL35 family.

The chain is Large ribosomal subunit protein bL35 from Phytoplasma mali (strain AT).